We begin with the raw amino-acid sequence, 353 residues long: Guanidino acid hydrolase, mitochondrial (353 aa).

The N-terminal 33 residues, 1–33, are a transit peptide targeting the mitochondrion; that stretch reads MLQLLKSSWVRSAGSGVVTWRASAGLFCPGTRQ. The disordered stretch occupies residues 29-52; that stretch reads PGTRQASDTSDTLHHPSPSSESQV. Residues His163 and His188 each coordinate Mn(2+). The residue at position 194 (Lys194) is an N6-acetyllysine. N6-acetyllysine; alternate is present on Lys218. Lys218 carries the N6-succinyllysine; alternate modification. Asp279 provides a ligand contact to Mn(2+).

The protein belongs to the arginase family. Agmatinase subfamily. Mn(2+) serves as cofactor.

The protein localises to the mitochondrion. The catalysed reaction is 3-guanidinopropanoate + H2O = urea + beta-alanine. It catalyses the reaction 4-guanidinobutanoate + H2O = urea + 4-aminobutanoate. The enzyme catalyses taurocyamine + H2O = urea + taurine. It carries out the reaction L-arginine + H2O = urea + L-ornithine. It participates in nitrogen metabolism; urea cycle; L-ornithine and urea from L-arginine: step 1/1. Functionally, hydrolyzes linear guanidino acids to form urea and the corresponding amines. Displays specificity for substrates having a negatively charged head group and short chains including taurocyamine, guanidino propanoic and butanoic acids. May protect cells by detoxifying potentially harmful amounts of guanidino acids. Metabolizes L-arginine with low efficiency. In Rattus norvegicus (Rat), this protein is Guanidino acid hydrolase, mitochondrial (Agmat).